We begin with the raw amino-acid sequence, 312 residues long: MRLVFAGTPEFARIALDALLAAGHDVPLVLTQPDRPAGRGLKLTPSPVKQAALAAGIEVAQPRSLRLDGRYPDEAAAARAQLERVAPDVMVVAAYGLILPQWTLDLPRLGCLNIHASLLPRWRGAAPIQRAIEAGDAETGVTIMQMDAGLDTGDMLLERAVPIGAQQTAAQLHDELARVGGQAIVDALAALAQGGLAPRRQPDAGVTYAAKLYKAEAALDCSLPAAVLARRVRAFNPVPGATIRLPGLDDPVKVWRAQALEQAAGGTSGAVLRADAQGIDIATGQGVLRLLELQKAGGKRQPVDVFVRGWQP.

117–120 (SLLP) lines the (6S)-5,6,7,8-tetrahydrofolate pocket.

The protein belongs to the Fmt family.

The enzyme catalyses L-methionyl-tRNA(fMet) + (6R)-10-formyltetrahydrofolate = N-formyl-L-methionyl-tRNA(fMet) + (6S)-5,6,7,8-tetrahydrofolate + H(+). Functionally, attaches a formyl group to the free amino group of methionyl-tRNA(fMet). The formyl group appears to play a dual role in the initiator identity of N-formylmethionyl-tRNA by promoting its recognition by IF2 and preventing the misappropriation of this tRNA by the elongation apparatus. This Bordetella pertussis (strain Tohama I / ATCC BAA-589 / NCTC 13251) protein is Methionyl-tRNA formyltransferase.